We begin with the raw amino-acid sequence, 145 residues long: 3-dehydroquinate dehydratase (145 aa).

The active-site Proton acceptor is Tyr23. 3 residues coordinate substrate: Asn73, His79, and Asp86. His99 functions as the Proton donor in the catalytic mechanism. Substrate is bound by residues 100 to 101 and Arg110; that span reads LS.

This sequence belongs to the type-II 3-dehydroquinase family. In terms of assembly, homododecamer.

The enzyme catalyses 3-dehydroquinate = 3-dehydroshikimate + H2O. It functions in the pathway metabolic intermediate biosynthesis; chorismate biosynthesis; chorismate from D-erythrose 4-phosphate and phosphoenolpyruvate: step 3/7. Its function is as follows. Catalyzes a trans-dehydration via an enolate intermediate. The polypeptide is 3-dehydroquinate dehydratase (Desulfitobacterium hafniense (strain Y51)).